A 760-amino-acid polypeptide reads, in one-letter code: MAAMFNHPWPNLTLIYFFFIVVLPFQSLSQFDSPQNIETFFPISSLSPVPPPLLPPSSNPSPPSNNSSSSDKKTITKAVLITAASTLLVAGVFFFCLQRCIIARRRRDRVGPVRVENTLPPYPPPPMTSAAVTTTTLAREGFTRFGGVKGLILDENGLDVLYWRKLQSQRERSGSFRKQIVTGEEEDEKEVIYYKNKKKTEPVTEIPLLRGRSSTSHSVIHNEDHQPPPQVKQSEPTPPPPPPSIAVKQSAPTPSPPPPIKKGSSPSPPPPPPVKKVGALSSSASKPPPAPVRGASGGETSKQVKLKPLHWDKVNPDSDHSMVWDKIDRGSFSFDGDLMEALFGYVAVGKKSPEQGDEKNPKSTQIFILDPRKSQNTAIVLKSLGMTREELVESLIEGNDFVPDTLERLARIAPTKEEQSAILEFDGDTAKLADAETFLFHLLKSVPTAFTRLNAFLFRANYYPEMAHHSKCLQTLDLACKELRSRGLFVKLLEAILKAGNRMNAGTARGNAQAFNLTALLKLSDVKSVDGKTSLLNFVVEEVVRSEGKRCVMNRRSHSLTRSGSSNYNGGNSSLQVMSKEEQEKEYLKLGLPVVGGLSSEFSNVKKAACVDYETVVATCSALAVRAKDAKTVIGECEDGEGGRFVKTMMTFLDSVEEEVKIAKGEERKVMELVKRTTDYYQAGAVTKGKNPLHLFVIVRDFLAMVDKVCLDIMRNMQRRKVGSPISPSSQRNAVKFPVLPPNFMSDRAWSDSGGSDSDM.

Residues 1–29 form the signal peptide; the sequence is MAAMFNHPWPNLTLIYFFFIVVLPFQSLS. Residues 52–63 show a composition bias toward pro residues; it reads PLLPPSSNPSPP. The disordered stretch occupies residues 52–71; sequence PLLPPSSNPSPPSNNSSSSD. A helical transmembrane segment spans residues 78–98; that stretch reads AVLITAASTLLVAGVFFFCLQ. A disordered region spans residues 204–313; that stretch reads TEIPLLRGRS…VKLKPLHWDK (110 aa). Positions 253–274 are enriched in pro residues; it reads TPSPPPPIKKGSSPSPPPPPPV. An FH2 domain is found at 296 to 732; it reads SGGETSKQVK…GSPISPSSQR (437 aa).

The protein belongs to the formin-like family. Class-I subfamily. Interacts with profilin.

The protein localises to the cell membrane. In terms of biological role, might be involved in the organization and polarity of the actin cytoskeleton. Interacts with the barbed end of actin filaments and nucleates actin-filament polymerization in vitro. In Arabidopsis thaliana (Mouse-ear cress), this protein is Formin-like protein 8 (FH8).